The chain runs to 103 residues: Large ribosomal subunit protein bL21 (103 aa).

Belongs to the bacterial ribosomal protein bL21 family. Part of the 50S ribosomal subunit. Contacts protein L20.

Functionally, this protein binds to 23S rRNA in the presence of protein L20. This is Large ribosomal subunit protein bL21 from Acidithiobacillus ferrooxidans (strain ATCC 23270 / DSM 14882 / CIP 104768 / NCIMB 8455) (Ferrobacillus ferrooxidans (strain ATCC 23270)).